A 943-amino-acid chain; its full sequence is MTDYKATLNLPDTAFPMKAGLPQREPQILQRWNSIGLYGKLREIGKDRPKFVLHDGPPYANGTIHIGHALNKILKDMILRSKTLSGFDAPYVPGWDCHGLPIEHKVEVTYGKNLGADKTRELCRAYATEQIEGQKSEFIRLGVLGEWDNPYKTMNFKNEAGEIRALAEIVKGGFVFKGLKPVNWCFDCGSALAEAEVEYEDKKSSTIDVAFPIADDAKLAEAFGLASLAKPAAIVIWTTTPWTIPANQALNVHPEFTYALVDVGDRLLVLAEEMVESCLARYELQGSVIATATGSALELINFRHPFYDRLSPVYLADYVELGSGTGIVHCSPAYGVDDFVICKKYGMVNDDIINPVQSNGVYVPSLEFFGGQFIFKADQPIIEKLREVGALMQTAAIQHSYMHCWRHKTPLIYRATAQWFIGMDKEPTSGDTLRVRSLKAIEDTKFVPSWGQARLHSMIANRPDWCISRQRNWGVPIPFFLNKESGELHPRTVELMEVVAQRVEQQGIEAWFKLDAAELLGDEAPLYDKISDTLDVWFDSGTTHWHVLRGSHPMGHETGPRADLYLEGSDQHRGWFHSSLLTGCAIDNHAPYRELLTHGFTVDETGRKMSKSLKNVIEPKKINDTLGADIMRLWVASTDYSGEIAVSDQILARSADAYRRIRNTARFMLSNLTGFNPASDLLPAEDMLALDRWAVDRTLLLQRELQEHYGEYRFWNVYSKIHNFCVQELGGFYLDIIKDRQYTTGANSKARRSAQTALYHISEALVRWIAPILAFTADELWEYLPGERNESVMLNTWYEGLTELPADFELGREYWEGVMAVKVAVNKELEVQRAAKAVGGNLQAEVTLFAEDGLTADLAKLSNELRFVLITSTASLAPFTQAPADAVATEVPGLKLKVVKSAFPKCARCWHCREDVGVNPEHPEICGRCVDNISGEGEVRHYA.

The 'HIGH' region motif lies at 58–68; it reads PYANGTIHIGH. Glu-567 contacts L-isoleucyl-5'-AMP. Positions 608–612 match the 'KMSKS' region motif; sequence KMSKS. ATP is bound at residue Lys-611. Cys-906, Cys-909, Cys-926, and Cys-929 together coordinate Zn(2+).

Belongs to the class-I aminoacyl-tRNA synthetase family. IleS type 1 subfamily. Monomer. Zn(2+) serves as cofactor.

Its subcellular location is the cytoplasm. The catalysed reaction is tRNA(Ile) + L-isoleucine + ATP = L-isoleucyl-tRNA(Ile) + AMP + diphosphate. Catalyzes the attachment of isoleucine to tRNA(Ile). As IleRS can inadvertently accommodate and process structurally similar amino acids such as valine, to avoid such errors it has two additional distinct tRNA(Ile)-dependent editing activities. One activity is designated as 'pretransfer' editing and involves the hydrolysis of activated Val-AMP. The other activity is designated 'posttransfer' editing and involves deacylation of mischarged Val-tRNA(Ile). In terms of biological role, confers resistance to the antibiotic mupirocin (pseudomonic acid A), an Ile-analog produced by P.fluorescens NCIMB 10586 itself that competitively inhibits activation by Ile-tRNA synthetase, thus inhibiting protein biosynthesis. The sequence is that of Isoleucine--tRNA ligase 1 (ileS1) from Pseudomonas fluorescens.